The primary structure comprises 148 residues: Protein Smg homolog (148 aa).

Belongs to the Smg family.

The polypeptide is Protein Smg homolog (Thiobacillus denitrificans (strain ATCC 25259 / T1)).